The sequence spans 367 residues: WAT1-related protein At3g28050 (367 aa).

A run of 10 helical transmembrane segments spans residues valine 10–phenylalanine 30, phenylalanine 40–phenylalanine 60, phenylalanine 73–glycine 93, threonine 103–phenylalanine 123, threonine 142–alanine 162, tryptophan 179–valine 199, phenylalanine 211–phenylalanine 231, isoleucine 246–histidine 266, leucine 276–phenylalanine 296, and leucine 301–tryptophan 321. 2 consecutive EamA domains span residues glycine 25–threonine 153 and leucine 195–valine 319. The interval histidine 338–valine 367 is disordered.

It belongs to the drug/metabolite transporter (DMT) superfamily. Plant drug/metabolite exporter (P-DME) (TC 2.A.7.4) family.

The protein resides in the membrane. In Arabidopsis thaliana (Mouse-ear cress), this protein is WAT1-related protein At3g28050.